The sequence spans 809 residues: Sucrose synthase 3 (809 aa).

The GT-B glycosyltransferase stretch occupies residues 277-755 (MVFNVVILSP…GLQRIYERYT (479 aa)).

Belongs to the glycosyltransferase 1 family. Plant sucrose synthase subfamily. Detected in the whole plant with highest expression in developing siliques, vasculature of cotyledons and stomatal guard cells. Also detected throughout the mature parts of the root but not in the expanding zone.

It carries out the reaction an NDP-alpha-D-glucose + D-fructose = a ribonucleoside 5'-diphosphate + sucrose + H(+). Sucrose-cleaving enzyme that provides UDP-glucose and fructose for various metabolic pathways. Modulates metabolic homeostasis and direct carbon towards starch synthesis in developing seeds. The chain is Sucrose synthase 3 (SUS3) from Arabidopsis thaliana (Mouse-ear cress).